The following is a 202-amino-acid chain: uncharacterized protein (202 aa).

A disordered region spans residues 1-20 (MVGAVTQIADRPTDPSPWSP). The HTH tetR-type domain occupies 19–79 (SPRETELLAV…AAFIEGIRQV (61 aa)).

This is an uncharacterized protein from Mycobacterium bovis (strain ATCC BAA-935 / AF2122/97).